A 417-amino-acid polypeptide reads, in one-letter code: NADH-quinone oxidoreductase subunit D (417 aa).

It belongs to the complex I 49 kDa subunit family. NDH-1 is composed of 14 different subunits. Subunits NuoB, C, D, E, F, and G constitute the peripheral sector of the complex.

Its subcellular location is the cell inner membrane. The catalysed reaction is a quinone + NADH + 5 H(+)(in) = a quinol + NAD(+) + 4 H(+)(out). Its function is as follows. NDH-1 shuttles electrons from NADH, via FMN and iron-sulfur (Fe-S) centers, to quinones in the respiratory chain. The immediate electron acceptor for the enzyme in this species is believed to be ubiquinone. Couples the redox reaction to proton translocation (for every two electrons transferred, four hydrogen ions are translocated across the cytoplasmic membrane), and thus conserves the redox energy in a proton gradient. This chain is NADH-quinone oxidoreductase subunit D, found in Polaromonas sp. (strain JS666 / ATCC BAA-500).